Here is a 563-residue protein sequence, read N- to C-terminus: Putative solute carrier family 26 member 10P (563 aa).

A run of 5 helical transmembrane segments spans residues 45–65 (ALLA…PVLI), 75–91 (LSTG…GSAV), 116–136 (VGVA…MFVL), 152–172 (ALTS…LLGL), and 352–372 (LAGL…GPFF). One can recognise an STAS domain in the interval 406–541 (RVDFLLQVPG…VSVQDAAAYA (136 aa)).

This sequence belongs to the SLC26A/SulP transporter (TC 2.A.53) family.

Its subcellular location is the membrane. Chloride/bicarbonate exchanger. This chain is Putative solute carrier family 26 member 10P (SLC26A10P), found in Homo sapiens (Human).